The sequence spans 229 residues: Potassium/proton antiporter CemA (229 aa).

3 helical membrane passes run 7–27 (FTPL…SFSV), 107–127 (ILHF…SILG), and 189–209 (IISG…KYWI).

It belongs to the CemA family.

The protein localises to the plastid. It localises to the chloroplast inner membrane. It catalyses the reaction K(+)(in) + H(+)(out) = K(+)(out) + H(+)(in). Its function is as follows. Contributes to K(+)/H(+) antiport activity by supporting proton efflux to control proton extrusion and homeostasis in chloroplasts in a light-dependent manner to modulate photosynthesis. Prevents excessive induction of non-photochemical quenching (NPQ) under continuous-light conditions. Indirectly promotes efficient inorganic carbon uptake into chloroplasts. The chain is Potassium/proton antiporter CemA from Nicotiana tomentosiformis (Tobacco).